An 81-amino-acid chain; its full sequence is Arminin 2a (81 aa).

The signal sequence occupies residues 1–18; it reads MKTVFAILFLAFIALTYA. The propeptide occupies 19–57; that stretch reads RSYEDVKEEIKNEVVKEILEDLEEESDELDDKSKEINDA. Ala78 bears the Alanine amide mark.

This sequence belongs to the arminin family. In terms of tissue distribution, expressed in entodermal epithelium along the body column.

It is found in the secreted. The protein localises to the target cell membrane. Its function is as follows. Antimicrobial peptide with a broad-spectrum antimicrobial activity. Keeps its antibacterial activity under a wide range of salt concentrations that mimic physiological conditions of human blood, which is surprising, since Hydra is an obligate freshwater animal with nearly no salt tolerance. Does not affect red blood cells. The sequence is that of Arminin 2a from Hydra vulgaris (Hydra).